The following is an 84-amino-acid chain: Small ribosomal subunit protein bS20 (84 aa).

Positions 1-22 (MPAPTKRERQNRKRFERNRSVR) are disordered. Positions 9–22 (RQNRKRFERNRSVR) are enriched in basic residues.

It belongs to the bacterial ribosomal protein bS20 family.

Functionally, binds directly to 16S ribosomal RNA. This is Small ribosomal subunit protein bS20 from Rubrobacter xylanophilus (strain DSM 9941 / JCM 11954 / NBRC 16129 / PRD-1).